A 252-amino-acid chain; its full sequence is Isoprenyl transferase (252 aa).

The active site involves D28. Mg(2+) is bound at residue D28. Residues 29–32, W33, R41, H45, and 73–75 contribute to the substrate site; these read GNGR and STE. N76 acts as the Proton acceptor in catalysis. Residues W77, R79, R200, and 206 to 208 contribute to the substrate site; that span reads RLS. E219 is a Mg(2+) binding site.

It belongs to the UPP synthase family. In terms of assembly, homodimer. It depends on Mg(2+) as a cofactor.

Catalyzes the condensation of isopentenyl diphosphate (IPP) with allylic pyrophosphates generating different type of terpenoids. The sequence is that of Isoprenyl transferase from Streptococcus pneumoniae serotype 4 (strain ATCC BAA-334 / TIGR4).